An 885-amino-acid chain; its full sequence is Phycobiliprotein ApcE (885 aa).

Cys185 provides a ligand contact to (2R,3E)-phycocyanobilin. PBS-linker domains lie at Asp242–Val422, Lys498–Lys680, and Asn694–Ser871.

This sequence belongs to the phycobilisome linker protein family. Post-translationally, contains one covalently linked bilin chromophore. This protein autochromophorylates (Potential).

It is found in the plastid. The protein localises to the chloroplast thylakoid membrane. Its function is as follows. This protein is postulated to act both as terminal energy acceptor and as a linker polypeptide that stabilizes the phycobilisome architecture. May have intrinsic bilin lyase activity. This is Phycobiliprotein ApcE (apcE) from Aglaothamnion neglectum (Red alga).